Here is a 164-residue protein sequence, read N- to C-terminus: Pyruvoyl-dependent arginine decarboxylase (164 aa).

At S52 the chain carries Pyruvic acid (Ser).

This sequence belongs to the PdaD family. Pyruvate serves as cofactor.

The enzyme catalyses L-arginine + H(+) = agmatine + CO2. The sequence is that of Pyruvoyl-dependent arginine decarboxylase from Methanococcus maripaludis (strain C6 / ATCC BAA-1332).